A 71-amino-acid polypeptide reads, in one-letter code: MGMRMMVTVFPLVVLATTVVSLRSNRASDGRRGIVNKLNDLVPKYWTECCGRIGPHCSRCICPGVVCPKRG.

A signal peptide spans 1–21 (MGMRMMVTVFPLVVLATTVVS). The propeptide occupies 22 to 44 (LRSNRASDGRRGIVNKLNDLVPK). An Arginine amide modification is found at arginine 70.

Belongs to the conotoxin A superfamily. In terms of processing, contains 3 disulfide bonds. They are not indicated here, since framework IV presents two different connectivities (I-V, II-III, IV-VI and I-III, II-V, IV-VI). Expressed by the venom duct.

Its subcellular location is the secreted. This is Conotoxin Bu25 from Conus bullatus (Bubble cone).